Reading from the N-terminus, the 120-residue chain is Large ribosomal subunit protein bL19 (120 aa).

This sequence belongs to the bacterial ribosomal protein bL19 family.

In terms of biological role, this protein is located at the 30S-50S ribosomal subunit interface and may play a role in the structure and function of the aminoacyl-tRNA binding site. This is Large ribosomal subunit protein bL19 from Synechococcus sp. (strain ATCC 27144 / PCC 6301 / SAUG 1402/1) (Anacystis nidulans).